The sequence spans 120 residues: MIAFRAVWSALLASLLLLLLAPSASPVDAFSPPEASLTGGQSLSKRSLFDPSCTGVFDRQLLRRLGRVCDDCFNVFREPNVATECRSNCYNNPVFRQCMAYVVPAHLHNEHREAVQMVGK.

An N-terminal signal peptide occupies residues 1–24 (MIAFRAVWSALLASLLLLLLAPSA). 3 cysteine pairs are disulfide-bonded: Cys-53–Cys-89, Cys-69–Cys-85, and Cys-72–Cys-98. Val-118 carries the valine amide modification.

The protein belongs to the arthropod CHH/MIH/GIH/VIH hormone family. Produced by the medulla terminalis X-organ in the eyestalks and transported to the sinus gland where they are stored and released.

It localises to the secreted. Hormone found in the sinus gland of isopods and decapods which controls the blood sugar level. Has a secretagogue action over the amylase released from the midgut gland. May act as a stress hormone and may be involved in the control of molting and reproduction. This Penaeus japonicus (Kuruma prawn) protein is Crustacean hyperglycemic hormones 1.